An 887-amino-acid polypeptide reads, in one-letter code: UPF0182 protein CTC_00086 (887 aa).

The next 7 membrane-spanning stretches (helical) occupy residues 9–29 (FIAI…SFII), 47–67 (FFTI…SIWL), 87–107 (LMIA…SSKY), 146–166 (VLIL…YFII), 195–215 (GKQL…GYII), 242–262 (IYRI…ISII), and 266–286 (IKPI…EGAT).

The protein belongs to the UPF0182 family.

The protein localises to the cell membrane. This Clostridium tetani (strain Massachusetts / E88) protein is UPF0182 protein CTC_00086.